Consider the following 372-residue polypeptide: Putative actin-27 (372 aa).

This sequence belongs to the actin family.

The protein resides in the cytoplasm. The protein localises to the cytoskeleton. It carries out the reaction ATP + H2O = ADP + phosphate + H(+). Its function is as follows. Actins are highly conserved proteins that are involved in various types of cell motility and are ubiquitously expressed in all eukaryotic cells. Multiple isoforms are involved in various cellular functions such as cytoskeleton structure, cell mobility, chromosome movement and muscle contraction. The polypeptide is Putative actin-27 (act27) (Dictyostelium discoideum (Social amoeba)).